A 156-amino-acid polypeptide reads, in one-letter code: Small ribosomal subunit protein uS7 (156 aa).

This sequence belongs to the universal ribosomal protein uS7 family. In terms of assembly, part of the 30S ribosomal subunit. Contacts proteins S9 and S11.

Its function is as follows. One of the primary rRNA binding proteins, it binds directly to 16S rRNA where it nucleates assembly of the head domain of the 30S subunit. Is located at the subunit interface close to the decoding center, probably blocks exit of the E-site tRNA. This is Small ribosomal subunit protein uS7 from Lawsonia intracellularis (strain PHE/MN1-00).